The primary structure comprises 420 residues: Zinc finger and BTB domain-containing protein 42 (420 aa).

Residues 24–92 (CDCTVLVGDA…MYEGRLDLHS (69 aa)) form the BTB domain. 2 disordered regions span residues 174 to 204 (PPSW…HPPC) and 216 to 248 (QGAQ…PPVC). Positions 227 to 241 (DSFSEQDSSSPQSAD) are enriched in low complexity. 4 C2H2-type zinc fingers span residues 292-314 (CICP…LSAH), 332-354 (PTCP…ERTH), 360-382 (YTCV…AVVH), and 388-411 (HACR…RKFH).

Belongs to the krueppel C2H2-type zinc-finger protein family. ZBTB18 subfamily.

It is found in the cytoplasm. It localises to the nucleus. Its subcellular location is the nucleoplasm. Functionally, transcriptional repressor. Specifically binds DNA and probably acts by recruiting chromatin remodeling multiprotein complexes. The sequence is that of Zinc finger and BTB domain-containing protein 42 (Zbtb42) from Rattus norvegicus (Rat).